A 149-amino-acid chain; its full sequence is Nucleoside diphosphate kinase (149 aa).

ATP-binding residues include Lys-9, Phe-57, Arg-85, Thr-91, Arg-102, and Asn-112. His-115 (pros-phosphohistidine intermediate) is an active-site residue.

This sequence belongs to the NDK family. In terms of assembly, homotetramer. Requires Mg(2+) as cofactor.

The protein localises to the cytoplasm. It carries out the reaction a 2'-deoxyribonucleoside 5'-diphosphate + ATP = a 2'-deoxyribonucleoside 5'-triphosphate + ADP. The enzyme catalyses a ribonucleoside 5'-diphosphate + ATP = a ribonucleoside 5'-triphosphate + ADP. Functionally, major role in the synthesis of nucleoside triphosphates other than ATP. The ATP gamma phosphate is transferred to the NDP beta phosphate via a ping-pong mechanism, using a phosphorylated active-site intermediate. The sequence is that of Nucleoside diphosphate kinase from Heliobacterium modesticaldum (strain ATCC 51547 / Ice1).